Consider the following 142-residue polypeptide: Large ribosomal subunit protein uL11 (142 aa).

The tract at residues 86-105 (LKSGSKEPGKQSAGQISRAK) is disordered.

This sequence belongs to the universal ribosomal protein uL11 family. As to quaternary structure, part of the ribosomal stalk of the 50S ribosomal subunit. Interacts with L10 and the large rRNA to form the base of the stalk. L10 forms an elongated spine to which L12 dimers bind in a sequential fashion forming a multimeric L10(L12)X complex. One or more lysine residues are methylated.

Forms part of the ribosomal stalk which helps the ribosome interact with GTP-bound translation factors. The polypeptide is Large ribosomal subunit protein uL11 (Chelativorans sp. (strain BNC1)).